We begin with the raw amino-acid sequence, 212 residues long: Riboflavin kinase (212 aa).

An H-T-H motif-like region spans residues 1-87; sequence MKMKTLFLLI…YEEISTALYS (87 aa). The riboflavin kinase stretch occupies residues 88-212; that stretch reads GFIVGEVISG…DGDKVRIEVV (125 aa). 97–102 is a CDP binding site; it reads GIGEGA. Mg(2+) contacts are provided by Thr-124 and Asn-126. FMN-binding residues include Thr-180 and Glu-188. 193–196 contributes to the CDP binding site; sequence VKLR.

This sequence belongs to the archaeal riboflavin kinase family. It depends on Mg(2+) as a cofactor.

It catalyses the reaction riboflavin + CTP = CDP + FMN + H(+). It functions in the pathway cofactor biosynthesis; FMN biosynthesis; FMN from riboflavin (CTP route): step 1/1. Functionally, catalyzes the CTP-dependent phosphorylation of riboflavin (vitamin B2) to form flavin mononucleotide (FMN). This is Riboflavin kinase (ribK) from Pyrococcus abyssi (strain GE5 / Orsay).